Here is a 309-residue protein sequence, read N- to C-terminus: Serine/threonine-protein phosphatase CPPED1 (309 aa).

Residues 47-250 (WRIGDCDSGG…FSGHYHRNAG (204 aa)) form a catalytic region. 4 residues coordinate a divalent metal cation: aspartate 51, aspartate 88, asparagine 125, and histidine 244.

It belongs to the metallophosphoesterase superfamily. CPPED1 family. Requires a divalent metal cation as cofactor.

Its subcellular location is the cytoplasm. It catalyses the reaction O-phospho-L-seryl-[protein] + H2O = L-seryl-[protein] + phosphate. The catalysed reaction is O-phospho-L-threonyl-[protein] + H2O = L-threonyl-[protein] + phosphate. In terms of biological role, protein phosphatase involved in the dephosphorylation of AKT kinase family. In Danio rerio (Zebrafish), this protein is Serine/threonine-protein phosphatase CPPED1 (cpped1).